The following is a 776-amino-acid chain: Protein FAM83C (776 aa).

Residues 1 to 340 (MQGCQAGASI…LYAESQPVEG (340 aa)) are DUF1669. Disordered regions lie at residues 344–467 (NEDP…STSP), 494–565 (SRLP…SLQH), 617–653 (HGQLDLLPQNPKPQAPKIPSDAYSSAGPSKPSLDDRR), 669–694 (PFRSEGPGPSCPPEPSPVRMAGVGSA), and 716–745 (QGARQKPEPGIPGAPVSGHQNGSSNDLFAP). A compositionally biased stretch (low complexity) spans 368-385 (SATGSSPSSNSLSSIKHS). The span at 452–467 (PWSQSSPALNHSSTSP) shows a compositional bias: polar residues. Positions 523–539 (VEEKKVSLSQSHDHLDR) are enriched in basic and acidic residues. The span at 554–563 (SRVTPDSSSL) shows a compositional bias: polar residues.

It belongs to the FAM83 family. As to quaternary structure, directly interacts (via DUF1669) with CSNK1A1 and CSNK1A1L. May interact with RAF1. Post-translationally, phosphorylated by CSNK1A1.

The protein localises to the cytoplasm. In terms of biological role, may play a role in MAPK signaling. The polypeptide is Protein FAM83C (Mus musculus (Mouse)).